A 466-amino-acid polypeptide reads, in one-letter code: RuvB-like helicase 2 (466 aa).

74–81 (GPPSTGKT) contributes to the ATP binding site.

It belongs to the RuvB family. In terms of assembly, may form heterododecamers with RVB1. Component of the SWR1 chromatin remodeling complex, the INO80 chromatin remodeling complex, and of the R2TP complex.

The protein resides in the nucleus. It carries out the reaction ATP + H2O = ADP + phosphate + H(+). Its function is as follows. DNA helicase which participates in several chromatin remodeling complexes, including the SWR1 and the INO80 complexes. The SWR1 complex mediates the ATP-dependent exchange of histone H2A for the H2A variant HZT1 leading to transcriptional regulation of selected genes by chromatin remodeling. The INO80 complex remodels chromatin by shifting nucleosomes and is involved in DNA repair. Also involved in pre-rRNA processing. In Yarrowia lipolytica (strain CLIB 122 / E 150) (Yeast), this protein is RuvB-like helicase 2 (RVB2).